The primary structure comprises 85 residues: Large ribosomal subunit protein bL27 (85 aa).

Residues 1-20 (MAHKKAGGSTRNGRDSESKR) are disordered.

This sequence belongs to the bacterial ribosomal protein bL27 family.

The sequence is that of Large ribosomal subunit protein bL27 from Yersinia pseudotuberculosis serotype O:1b (strain IP 31758).